The primary structure comprises 227 residues: Thymidylate kinase (227 aa).

16–23 contacts ATP; it reads GIDGAGKT.

Belongs to the thymidylate kinase family.

It carries out the reaction dTMP + ATP = dTDP + ADP. Its function is as follows. Phosphorylation of dTMP to form dTDP in both de novo and salvage pathways of dTTP synthesis. The polypeptide is Thymidylate kinase (Xanthomonas campestris pv. campestris (strain 8004)).